A 137-amino-acid polypeptide reads, in one-letter code: Drosulfakinins (137 aa).

Residues 1–31 (MGLRSCTHFATLVIPLWALAFCFLVVVPVPA) form the signal peptide. Positions 32 to 74 (QTNLQTSKGDRRLQDLESNMGAESDQPNANLVRPSLSRFGDKR) are excised as a propeptide. Phenylalanine 81 carries the phenylalanine amide modification. A propeptide spanning residues 85 to 107 (VPRPMIPIELDLLMDNDDENTKA) is cleaved from the precursor. Residue tyrosine 113 is modified to Sulfotyrosine. The residue at position 118 (phenylalanine 118) is a Phenylalanine amide. Tyrosine 130 is subject to Sulfotyrosine. A Phenylalanine amide modification is found at phenylalanine 135.

Belongs to the gastrin/cholecystokinin family.

Its subcellular location is the secreted. Drosulfakinin-0 (DSK 0) plays diverse biological roles including regulating gut muscle contraction in adults but not in larvae. In Drosophila yakuba (Fruit fly), this protein is Drosulfakinins.